Consider the following 346-residue polypeptide: Enoyl-[acyl-carrier-protein] reductase, mitochondrial (346 aa).

A mitochondrion-targeting transit peptide spans 1 to 22 (MQKTIRSQALIYRKFGDPLKVL). Y59 (proton donor) is an active-site residue. Residues N131, 157 to 160 (NSGV), 180 to 182 (RNR), 249 to 252 (YGGM), 274 to 276 (VAV), and K332 each bind NADP(+).

It belongs to the zinc-containing alcohol dehydrogenase family. Quinone oxidoreductase subfamily. In terms of assembly, homodimer.

The protein resides in the mitochondrion. It catalyses the reaction a 2,3-saturated acyl-[ACP] + NADP(+) = a (2E)-enoyl-[ACP] + NADPH + H(+). Its function is as follows. Catalyzes the NADPH-dependent reduction of trans-2-enoyl thioesters in mitochondrial fatty acid synthesis (fatty acid synthesis type II). Fatty acid chain elongation in mitochondria uses acyl carrier protein (ACP) as an acyl group carrier, but the enzyme accepts both ACP and CoA thioesters as substrates in vitro. May provide the octanoyl chain used for lipoic acid biosynthesis, regulating protein lipoylation and mitochondrial respiratory activity. Involved in iron homeostasis; affecting Fe-S cluster assembly and ceramide metabolism. Required for proper morphology and bioenergetic functions of mitochondria. Required for maintenance of neurons. The sequence is that of Enoyl-[acyl-carrier-protein] reductase, mitochondrial from Caenorhabditis elegans.